The chain runs to 221 residues: MPGSRIALRHGLIDAARQVTTLGLNKGTAGNLSVRAGDGLLITPSGLQAADLRPNDIVFIDSEGEWRGPRKPSSEWRFHHDILAERPDVGAVVHTHAPFSTVLACLGRPIPAFHYMVAMAGGNDIRIGAYATFGTAELSRHALAAMEGRKACLLAHHGMIATGRTLKAAIKLAVEVEELAEQYWRCLQIAEPEILPADEMERVLEKFKTYGDNAQLPSPPA.

Residue glutamate 75 is the Proton donor/acceptor of the active site. Co(2+) is bound by residues glutamate 75, histidine 94, histidine 96, and histidine 157.

This sequence belongs to the aldolase class II family. It depends on Co(2+) as a cofactor.

The enzyme catalyses 5-(methylsulfanyl)-D-ribulose 1-phosphate = 2-(methylsulfanyl)acetaldehyde + dihydroxyacetone phosphate. It carries out the reaction 5-deoxy-D-ribulose 1-phosphate = dihydroxyacetone phosphate + acetaldehyde. It participates in amino-acid biosynthesis; L-methionine biosynthesis via salvage pathway. Its function is as follows. Uses 5-methylthioribulose-1-phosphate to yield 2-(methylthio)acetaldehyde and dihydroxyacetone phosphate. Can also use 5-deoxyribulose 1-phosphate to yield acetaldehyde and dihydroxyacetone phosphate. Part of a bifunctional DHAP-shunt salvage pathway for SAM by-products. In Rhodospirillum rubrum (strain ATCC 11170 / ATH 1.1.1 / DSM 467 / LMG 4362 / NCIMB 8255 / S1), this protein is 5-methylthioribulose-1-phosphate/5-deoxyribulose-1-phosphate aldolase.